A 66-amino-acid chain; its full sequence is Large ribosomal subunit protein bL33c (66 aa).

The protein belongs to the bacterial ribosomal protein bL33 family.

It is found in the plastid. The protein localises to the chloroplast. This chain is Large ribosomal subunit protein bL33c, found in Cryptomeria japonica (Japanese cedar).